The chain runs to 228 residues: 2-C-methyl-D-erythritol 4-phosphate cytidylyltransferase (228 aa).

It belongs to the IspD/TarI cytidylyltransferase family. IspD subfamily.

The catalysed reaction is 2-C-methyl-D-erythritol 4-phosphate + CTP + H(+) = 4-CDP-2-C-methyl-D-erythritol + diphosphate. It participates in isoprenoid biosynthesis; isopentenyl diphosphate biosynthesis via DXP pathway; isopentenyl diphosphate from 1-deoxy-D-xylulose 5-phosphate: step 2/6. In terms of biological role, catalyzes the formation of 4-diphosphocytidyl-2-C-methyl-D-erythritol from CTP and 2-C-methyl-D-erythritol 4-phosphate (MEP). The polypeptide is 2-C-methyl-D-erythritol 4-phosphate cytidylyltransferase (Trichormus variabilis (strain ATCC 29413 / PCC 7937) (Anabaena variabilis)).